The primary structure comprises 527 residues: Protein disulfide-isomerase A2 (527 aa).

A signal peptide spans 1–20; that stretch reads MDKQLLPVLLLLLGVSGSWG. A disordered region spans residues 20-41; the sequence is GQGEEPGGPSEVLPEEPTGEEV. The Thioredoxin 1 domain maps to 29–155; the sequence is SEVLPEEPTG…IAEWLRRRVG (127 aa). Catalysis depends on nucleophile residues Cys74 and Cys77. A disulfide bond links Cys74 and Cys77. 2 N-linked (GlcNAc...) asparagine glycosylation sites follow: Asn130 and Asn287. One can recognise a Thioredoxin 2 domain in the interval 355-499; the sequence is VIAITAASVA…FSKFLDSGGH (145 aa). Active-site nucleophile residues include Cys421 and Cys424. Residues Cys421 and Cys424 are joined by a disulfide bond. The tract at residues 495–527 is disordered; sequence DSGGHLPKEEPKEPAASAPEAQANSTLGPKEEL. Residue Asn518 is glycosylated (N-linked (GlcNAc...) asparagine). Residues 524 to 527 carry the Prevents secretion from ER motif; the sequence is KEEL.

It belongs to the protein disulfide isomerase family. Part of a large chaperone multiprotein complex comprising DNAJB11, HSP90B1, HSPA5, HYOU, PDIA2, PDIA4, PDIA6, PPIB, SDF2L1, UGGT1 and very small amounts of ERP29, but not, or at very low levels, CALR nor CANX. In terms of processing, glycosylated. In terms of tissue distribution, highly expressed in pancreas.

It localises to the endoplasmic reticulum lumen. The catalysed reaction is Catalyzes the rearrangement of -S-S- bonds in proteins.. Acts as an intracellular estrogen-binding protein. May be involved in modulating cellular levels and biological functions of estrogens in the pancreas. May act as a chaperone that inhibits aggregation of misfolded proteins. The polypeptide is Protein disulfide-isomerase A2 (Mus musculus (Mouse)).